Here is a 340-residue protein sequence, read N- to C-terminus: 4-hydroxy-2-oxovalerate aldolase (340 aa).

Positions 8 to 260 (VILHDMSLRD…SHGINLYDIM (253 aa)) constitute a Pyruvate carboxyltransferase domain. Substrate is bound at residue 16-17 (RD). Asp-17 serves as a coordination point for Mn(2+). The active-site Proton acceptor is the His-20. Ser-170 and His-199 together coordinate substrate. The Mn(2+) site is built by His-199 and His-201. Tyr-290 is a substrate binding site.

Belongs to the 4-hydroxy-2-oxovalerate aldolase family.

The enzyme catalyses (S)-4-hydroxy-2-oxopentanoate = acetaldehyde + pyruvate. This Shewanella pealeana (strain ATCC 700345 / ANG-SQ1) protein is 4-hydroxy-2-oxovalerate aldolase.